The following is a 385-amino-acid chain: GTPase Obg (385 aa).

The Obg domain occupies 1–159 (MKFVDEATIL…REIQLELMLL (159 aa)). The 174-residue stretch at 160–333 (ADVGMLGLPN…LCWDVMAFIN (174 aa)) folds into the OBG-type G domain. GTP-binding positions include 166–173 (GLPNAGKS), 191–195 (FTTLV), 213–216 (DIPG), 283–286 (NKAD), and 314–316 (SAA). The Mg(2+) site is built by S173 and T193. Over residues 362-379 (QQEEAEETLDDDWDEDGV) the composition is skewed to acidic residues. Positions 362 to 385 (QQEEAEETLDDDWDEDGVETIYQR) are disordered.

The protein belongs to the TRAFAC class OBG-HflX-like GTPase superfamily. OBG GTPase family. Monomer. Mg(2+) serves as cofactor.

It localises to the cytoplasm. Its function is as follows. An essential GTPase which binds GTP, GDP and possibly (p)ppGpp with moderate affinity, with high nucleotide exchange rates and a fairly low GTP hydrolysis rate. Plays a role in control of the cell cycle, stress response, ribosome biogenesis and in those bacteria that undergo differentiation, in morphogenesis control. The polypeptide is GTPase Obg (Sodalis glossinidius (strain morsitans)).